A 635-amino-acid polypeptide reads, in one-letter code: 1-deoxy-D-xylulose-5-phosphate synthase (635 aa).

Residues His-73 and 114–116 (SHA) each bind thiamine diphosphate. Mg(2+) is bound at residue Asp-146. Thiamine diphosphate contacts are provided by residues 147 to 148 (GA), Asn-176, Tyr-287, and Glu-368. Asn-176 is a binding site for Mg(2+).

The protein belongs to the transketolase family. DXPS subfamily. Homodimer. Requires Mg(2+) as cofactor. Thiamine diphosphate is required as a cofactor.

The catalysed reaction is D-glyceraldehyde 3-phosphate + pyruvate + H(+) = 1-deoxy-D-xylulose 5-phosphate + CO2. The protein operates within metabolic intermediate biosynthesis; 1-deoxy-D-xylulose 5-phosphate biosynthesis; 1-deoxy-D-xylulose 5-phosphate from D-glyceraldehyde 3-phosphate and pyruvate: step 1/1. In terms of biological role, catalyzes the acyloin condensation reaction between C atoms 2 and 3 of pyruvate and glyceraldehyde 3-phosphate to yield 1-deoxy-D-xylulose-5-phosphate (DXP). The protein is 1-deoxy-D-xylulose-5-phosphate synthase of Corynebacterium diphtheriae (strain ATCC 700971 / NCTC 13129 / Biotype gravis).